We begin with the raw amino-acid sequence, 759 residues long: uncharacterized protein (759 aa).

An MCM domain is found at 352–556 (VIQKLSDYAF…KDEDIADFSI (205 aa)). 397 to 404 (SDPGVGKS) provides a ligand contact to ATP.

This sequence belongs to the MCM family.

This is an uncharacterized protein from Methanocaldococcus jannaschii (strain ATCC 43067 / DSM 2661 / JAL-1 / JCM 10045 / NBRC 100440) (Methanococcus jannaschii).